Here is a 237-residue protein sequence, read N- to C-terminus: Ribonuclease PH (237 aa).

Residues Arg86 and Gly124–Arg126 each bind phosphate.

It belongs to the RNase PH family. As to quaternary structure, homohexameric ring arranged as a trimer of dimers.

The enzyme catalyses tRNA(n+1) + phosphate = tRNA(n) + a ribonucleoside 5'-diphosphate. Phosphorolytic 3'-5' exoribonuclease that plays an important role in tRNA 3'-end maturation. Removes nucleotide residues following the 3'-CCA terminus of tRNAs; can also add nucleotides to the ends of RNA molecules by using nucleoside diphosphates as substrates, but this may not be physiologically important. Probably plays a role in initiation of 16S rRNA degradation (leading to ribosome degradation) during starvation. This is Ribonuclease PH from Bradyrhizobium sp. (strain BTAi1 / ATCC BAA-1182).